The primary structure comprises 1187 residues: DNA-directed RNA polymerase subunit beta (1187 aa).

It belongs to the RNA polymerase beta chain family. The RNAP catalytic core consists of 2 alpha, 1 beta, 1 beta' and 1 omega subunit. When a sigma factor is associated with the core the holoenzyme is formed, which can initiate transcription.

The catalysed reaction is RNA(n) + a ribonucleoside 5'-triphosphate = RNA(n+1) + diphosphate. In terms of biological role, DNA-dependent RNA polymerase catalyzes the transcription of DNA into RNA using the four ribonucleoside triphosphates as substrates. This chain is DNA-directed RNA polymerase subunit beta, found in Streptococcus mutans serotype c (strain ATCC 700610 / UA159).